The following is a 57-amino-acid chain: Protein new-glue 4 (57 aa).

A signal peptide spans 1–16; that stretch reads MEWKLLLIVLPWLLVC.

It is found in the secreted. This chain is Protein new-glue 4 (ng4), found in Drosophila melanogaster (Fruit fly).